The chain runs to 421 residues: MALVVQKYGGSSVADAERIRRVAERIVETKKAGNDVVVVVSAMGDTTDDLLDLARQVSPAPPPREMDMLLTAGERISNALVAMAIESLGAQARSFTGSQAGVITTGTHGNAKIIDVTPGRLRDALDEGQIVLVAGFQGVSQDSKDVTTLGRGGSDTTAVAVAAALDADVCEIYTDVDGIFTADPRIVPNARHLDTVSFEEMLEMAACGAKVLMLRCVEYARRYNVPIHVRSSYSDKPGTIVKGSIEDIPMEDAILTGVAHDRSEAKVTVVGLPDVPGYAAKVFRAVAEADVNIDMVLQNISKIEDGKTDITFTCARDNGPRAVEKLSALKSEIGFSQVLYDDHIGKVSLIGAGMRSHPGVTATFCEALAEAGINIDLISTSEIRISVLIKDTELDKAVSALHEAFGLGGDDEAVVYAGTGR.

An ATP-binding site is contributed by 7–10 (KYGG). 25–30 (RIVETK) provides a ligand contact to substrate. ATP is bound at residue S41. Residues 45–49 (DTTDD), E74, 125–126 (LD), 151–154 (RGGS), and S154 contribute to the substrate site. ATP-binding positions include 174 to 175 (TD), 180 to 185 (FTADPR), and K210. 2 ACT domains span residues 267-348 (VTVV…GKVS) and 349-421 (LIGA…GTGR). Residues D274, 274–279 (DVPGYA), 292–294 (NID), Q298, 360–361 (VT), 374–375 (NI), and 381–382 (SE) contribute to the substrate site.

Belongs to the aspartokinase family. Heterotetramer consisting of 2 isoforms Alpha (catalytic and regulation) and of a homodimer of 2 isoforms Beta (regulation).

The enzyme catalyses L-aspartate + ATP = 4-phospho-L-aspartate + ADP. It participates in amino-acid biosynthesis; L-lysine biosynthesis via DAP pathway; (S)-tetrahydrodipicolinate from L-aspartate: step 1/4. Its pathway is amino-acid biosynthesis; L-methionine biosynthesis via de novo pathway; L-homoserine from L-aspartate: step 1/3. It functions in the pathway amino-acid biosynthesis; L-threonine biosynthesis; L-threonine from L-aspartate: step 1/5. Feedback inhibition by lysine and threonine. Catalyzes the phosphorylation of the beta-carboxyl group of aspartic acid with ATP to yield 4-phospho-L-aspartate, which is involved in the branched biosynthetic pathway leading to the biosynthesis of amino acids lysine, threonine, isoleucine and methionine. This chain is Aspartokinase (ask), found in Mycolicibacterium smegmatis (Mycobacterium smegmatis).